The primary structure comprises 237 residues: Eukaryotic translation initiation factor 4E-1 (237 aa).

Positions Met-1–Pro-61 are disordered. Residues Asn-25 to Asp-44 are compositionally biased toward acidic residues. Over residues Ala-47 to Ala-58 the composition is skewed to low complexity. EIF4G-binding regions lie at residues His-62 to Glu-65 and Phe-72 to His-108. Residues Lys-80–Gly-85, Lys-112, and Trp-130–Glu-131 each bind mRNA. A disulfide bond links Cys-135 and Cys-173. The interval Tyr-156 to Gln-165 is EIF4G-binding. MRNA is bound by residues Arg-180–Lys-185 and Lys-225–Arg-229.

It belongs to the eukaryotic initiation factor 4E family. As to quaternary structure, EIF4F is a multi-subunit complex, the composition of which varies with external and internal environmental conditions. It is composed of at least EIF4A, EIF4E and EIF4G. EIF4E is also known to interact with other partners. In higher plants two isoforms of EIF4F have been identified, named isoform EIF4F and isoform EIF(iso)4F. Isoform EIF4F has subunits p220 and p26, whereas isoform EIF(iso)4F has subunits p82 and p28. In terms of assembly, (Microbial infection) Interacts with potyvirus viral genome-linked protein (VPg) in the nucleus; this interaction is possible in susceptible hosts but is impaired in resistant plants. Binds to soybean mosaic virus (SMV) VPg in the nucleus. Interacts with SMV nuclear inclusion protein A (NIa-Pro) and nuclear inclusion protein B (NIb) in the cytoplasm. According to the redox status, the Cys-135-Cys-173 disulfide bridge may have a role in regulating protein function by affecting its ability to bind capped mRNA. Mostly expressed in roots, flowers, immature pods and mature seeds, and, to a lower extent, in stems and leaves.

It is found in the nucleus. The protein localises to the cytoplasm. Component of the protein complex eIF4F, which is involved in the recognition of the mRNA cap, ATP-dependent unwinding of 5'-terminal secondary structure and recruitment of mRNA to the ribosome. Recognizes and binds the 7-methylguanosine-containing mRNA cap during an early step in the initiation of protein synthesis and facilitates ribosome binding by inducing the unwinding of the mRNAs secondary structures. Key component of recessive resistance to potyviruses (e.g. soybean mosaic virus (SMV), bean common mosaic virus (BCMV) and watermelon mosaic virus (WMV), but not bean pod mottle virus (BPMV)). In terms of biological role, (Microbial infection) Susceptibility host factor required for viral infection by recruiting viral RNAs to the host ribosomal complex via an interaction with viral genome-linked protein (VPg). The polypeptide is Eukaryotic translation initiation factor 4E-1 (Glycine max (Soybean)).